Consider the following 1291-residue polypeptide: DNA-directed RNA polymerase subunit beta (1291 aa).

It belongs to the RNA polymerase beta chain family. In terms of assembly, the RNAP catalytic core consists of 2 alpha, 1 beta, 1 beta' and 1 omega subunit. When a sigma factor is associated with the core the holoenzyme is formed, which can initiate transcription.

The enzyme catalyses RNA(n) + a ribonucleoside 5'-triphosphate = RNA(n+1) + diphosphate. DNA-dependent RNA polymerase catalyzes the transcription of DNA into RNA using the four ribonucleoside triphosphates as substrates. This is DNA-directed RNA polymerase subunit beta from Cytophaga hutchinsonii (strain ATCC 33406 / DSM 1761 / CIP 103989 / NBRC 15051 / NCIMB 9469 / D465).